Here is a 335-residue protein sequence, read N- to C-terminus: Large ribosomal subunit protein uL10 (335 aa).

Residues 300 to 335 are disordered; it reads QVSEQAAEKKEEKKEEEKKGPSEEEIGGGLSSLFGG. The span at 305–321 shows a compositional bias: basic and acidic residues; that stretch reads AAEKKEEKKEEEKKGPS. Over residues 326-335 the composition is skewed to gly residues; that stretch reads GGGLSSLFGG.

The protein belongs to the universal ribosomal protein uL10 family. As to quaternary structure, part of the 50S ribosomal subunit. Forms part of the ribosomal stalk which helps the ribosome interact with GTP-bound translation factors. Forms a heptameric L10(L12)2(L12)2(L12)2 complex, where L10 forms an elongated spine to which the L12 dimers bind in a sequential fashion.

Its function is as follows. Forms part of the ribosomal stalk, playing a central role in the interaction of the ribosome with GTP-bound translation factors. The sequence is that of Large ribosomal subunit protein uL10 from Sulfolobus acidocaldarius (strain ATCC 33909 / DSM 639 / JCM 8929 / NBRC 15157 / NCIMB 11770).